The chain runs to 340 residues: Pseudaminic acid synthase (340 aa).

One can recognise an AFP-like domain in the interval 281–337 (SLFVIKDIQKGEALTENNIKALRPNLGLHPKFYKEILGQKASKFLKANTPLSADDIE).

Belongs to the pseudaminic acid synthase family. Requires a divalent metal cation as cofactor.

The catalysed reaction is 2,4-diacetamido-2,4,6-trideoxy-beta-L-altrose + phosphoenolpyruvate + H2O = pseudaminate + phosphate. Catalyzes the fifth step in the biosynthesis of pseudaminic acid, a sialic-acid-like sugar that is used to modify flagellin. Catalyzes the condensation of phosphoenolpyruvate with 2,4-diacetamido-2,4,6-trideoxy-beta-l-altropyranose, forming pseudaminic acid. This is Pseudaminic acid synthase (pseI) from Helicobacter pylori (strain ATCC 700392 / 26695) (Campylobacter pylori).